The following is a 106-amino-acid chain: Protein aveugle (106 aa).

One can recognise an SAM domain in the interval 26–91 (WTVSDVLKWY…WREIVKQRLK (66 aa)).

Interacts with the SAM domain of cnk.

The protein localises to the cytoplasm. It is found in the membrane. Required for normal photoreceptor differentiation between Ras and Raf for EGFR signaling in the eye and for mitogen-activated protein kinase phosphorylation. Probably acts together with Cnk to promote Raf activation, perhaps by recruiting an activating kinase. The sequence is that of Protein aveugle (ave) from Drosophila melanogaster (Fruit fly).